The following is a 71-amino-acid chain: Large ribosomal subunit protein uL30 (71 aa).

This sequence belongs to the universal ribosomal protein uL30 family. As to quaternary structure, part of the 50S ribosomal subunit.

The polypeptide is Large ribosomal subunit protein uL30 (Mycobacterium leprae (strain TN)).